Reading from the N-terminus, the 344-residue chain is Arginine N-succinyltransferase (344 aa).

Position 125 (leucine 125) interacts with succinyl-CoA. Histidine 229 (proton donor) is an active-site residue.

Belongs to the arginine N-succinyltransferase family.

It catalyses the reaction succinyl-CoA + L-arginine = N(2)-succinyl-L-arginine + CoA + H(+). It functions in the pathway amino-acid degradation; L-arginine degradation via AST pathway; L-glutamate and succinate from L-arginine: step 1/5. Functionally, catalyzes the transfer of succinyl-CoA to arginine to produce N(2)-succinylarginine. The chain is Arginine N-succinyltransferase from Escherichia coli O157:H7.